Consider the following 35-residue polypeptide: Ranatuerin-2SPb (35 aa).

Cysteine 28 and cysteine 33 form a disulfide bridge.

In terms of tissue distribution, expressed by the skin glands.

The protein resides in the secreted. Antibacterial activity against Gram-positive bacterium S.aureus. Shows no detectable hemolytic activity towards human erythrocytes. This Lithobates septentrionalis (Mink frog) protein is Ranatuerin-2SPb.